Reading from the N-terminus, the 158-residue chain is NKG2-F type II integral membrane protein (158 aa).

Over residues 1–12 (MNKQRGTYSEVS) the composition is skewed to polar residues. The tract at residues 1–30 (MNKQRGTYSEVSLAQDPKRQQRKLKGNKSS) is disordered. The Cytoplasmic segment spans residues 1–74 (MNKQRGTYSE…LPPPERLTAE (74 aa)). The helical transmembrane segment at 75 to 95 (VLGIICIVLMATVLKTIVLIP) threads the bilayer. Residues 96–158 (CIGVLEQNNF…VLQRTLICFL (63 aa)) are Extracellular-facing.

In terms of assembly, can form disulfide-bonded heterodimer with CD94. As to expression, natural killer cells.

The protein resides in the membrane. Functionally, may play a role as a receptor for the recognition of MHC class I HLA-E molecules by NK cells. The polypeptide is NKG2-F type II integral membrane protein (KLRC4) (Pan troglodytes (Chimpanzee)).